The chain runs to 319 residues: UDP-N-acetylenolpyruvoylglucosamine reductase (319 aa).

Positions 35–198 (VGGPAEAMFK…TGCVLAGRPD (164 aa)) constitute an FAD-binding PCMH-type domain. Arginine 178 is an active-site residue. The active-site Proton donor is the serine 227. Glutamate 302 is an active-site residue.

This sequence belongs to the MurB family. FAD serves as cofactor.

It localises to the cytoplasm. It catalyses the reaction UDP-N-acetyl-alpha-D-muramate + NADP(+) = UDP-N-acetyl-3-O-(1-carboxyvinyl)-alpha-D-glucosamine + NADPH + H(+). The protein operates within cell wall biogenesis; peptidoglycan biosynthesis. Its function is as follows. Cell wall formation. In Rhodospirillum rubrum (strain ATCC 11170 / ATH 1.1.1 / DSM 467 / LMG 4362 / NCIMB 8255 / S1), this protein is UDP-N-acetylenolpyruvoylglucosamine reductase.